The following is a 41-amino-acid chain: Omega-theraphotoxin-Hg1a (41 aa).

Disulfide bonds link Cys-7–Cys-21, Cys-14–Cys-26, and Cys-20–Cys-33.

This sequence belongs to the neurotoxin 10 (Hwtx-1) family. 56 (SNX-482) subfamily. As to expression, expressed by the venom gland.

The protein resides in the secreted. Functionally, toxin that blocks vertebrate P/Q-type (Cav2.1/CACNA1A) and R-type (Cav2.3/CACNA1E) voltage-gated calcium channels. Also inhibits sodium channels (Nav) in bovine chromaffin cells by delaying sodium channel inactivation. The chain is Omega-theraphotoxin-Hg1a from Hysterocrates gigas (Cameroon red baboon tarantula).